The following is a 195-amino-acid chain: Penicillin-binding protein activator LpoB (195 aa).

The first 16 residues, 1-16 (MKKRALIVLAALVLAS), serve as a signal peptide directing secretion. The N-palmitoyl cysteine moiety is linked to residue Cys17. A lipid anchor (S-diacylglycerol cysteine) is attached at Cys17. A disordered region spans residues 19–51 (SRKPASPPAPIEPVPPPVTVSVQPPPPATSEPV). Residues 23-51 (ASPPAPIEPVPPPVTVSVQPPPPATSEPV) are compositionally biased toward pro residues.

The protein belongs to the LpoB family. Interacts with PBP1b.

Its subcellular location is the cell outer membrane. Regulator of peptidoglycan synthesis that is essential for the function of penicillin-binding protein 1B (PBP1b). The polypeptide is Penicillin-binding protein activator LpoB (Sodalis glossinidius (strain morsitans)).